A 321-amino-acid chain; its full sequence is Glucokinase (321 aa).

An ATP-binding site is contributed by 8 to 13 (GDVGGT).

This sequence belongs to the bacterial glucokinase family.

The protein resides in the cytoplasm. It carries out the reaction D-glucose + ATP = D-glucose 6-phosphate + ADP + H(+). The sequence is that of Glucokinase from Klebsiella pneumoniae (strain 342).